Reading from the N-terminus, the 196-residue chain is Chromophore lyase CpcT/CpeT (196 aa).

It belongs to the CpcT/CpeT biliprotein lyase family.

Its function is as follows. Covalently attaches a chromophore to Cys residue(s) of phycobiliproteins. The protein is Chromophore lyase CpcT/CpeT of Synechocystis sp. (strain ATCC 27184 / PCC 6803 / Kazusa).